Here is a 223-residue protein sequence, read N- to C-terminus: Endonuclease V (223 aa).

Mg(2+) is bound by residues Asp-35 and Asp-103.

This sequence belongs to the endonuclease V family. Mg(2+) is required as a cofactor.

The protein localises to the cytoplasm. It catalyses the reaction Endonucleolytic cleavage at apurinic or apyrimidinic sites to products with a 5'-phosphate.. In terms of biological role, DNA repair enzyme involved in the repair of deaminated bases. Selectively cleaves double-stranded DNA at the second phosphodiester bond 3' to a deoxyinosine leaving behind the intact lesion on the nicked DNA. The protein is Endonuclease V of Shigella flexneri serotype 5b (strain 8401).